Reading from the N-terminus, the 315-residue chain is Ribosomal RNA small subunit methyltransferase H (315 aa).

S-adenosyl-L-methionine contacts are provided by residues 37-39, Asp-57, Asp-105, and Gln-112; that span reads GGH.

This sequence belongs to the methyltransferase superfamily. RsmH family.

Its subcellular location is the cytoplasm. The catalysed reaction is cytidine(1402) in 16S rRNA + S-adenosyl-L-methionine = N(4)-methylcytidine(1402) in 16S rRNA + S-adenosyl-L-homocysteine + H(+). In terms of biological role, specifically methylates the N4 position of cytidine in position 1402 (C1402) of 16S rRNA. This Nitrosococcus oceani (strain ATCC 19707 / BCRC 17464 / JCM 30415 / NCIMB 11848 / C-107) protein is Ribosomal RNA small subunit methyltransferase H.